We begin with the raw amino-acid sequence, 457 residues long: MLHLYNTLSRQKERFQPIQPGKVNMYVCGMTVYDYCHLGHARVMVVFDMVARWLRASGYDLTYVRNITDIDDKIIRRAAENGEPINVLTQRFIDAMDEDAAALGVQKPNFEPRATQFVPDMISMIEELIGKGRAYAAPNGDVYYAVREFAGYGQLSGKSLDDLRAGERVDVDPNKRDPMDFVLWKAAKPGEPAWPSPWGQGRPGWHIECSAMNEHYFGPHFDIHGGGADLQFPHHENEIAQSEGAHDCKFVNYWMHNGFIRVDNEKMSKSLGNFFTIREVLEKYDAEVVRFFILRAHYRSPLNYSDAHLEDARSALSRLYTALKNVPAADVALDWEANDYARRFRAAMDDDFNTVEAVAVLFELAGEANKSRSAELAGWLKTLGGVLGLLQRDPVDFLQGGSLEGEISADEVEQLIAARKAARAGKDWAESDRIRDELIARGIVLEDGAGGTTWRRA.

Residue Cys-28 coordinates Zn(2+). Residues 30 to 40 (MTVYDYCHLGH) carry the 'HIGH' region motif. Residues Cys-209, His-234, and Glu-238 each contribute to the Zn(2+) site. A 'KMSKS' region motif is present at residues 266 to 270 (KMSKS). Lys-269 lines the ATP pocket.

This sequence belongs to the class-I aminoacyl-tRNA synthetase family. As to quaternary structure, monomer. Zn(2+) is required as a cofactor.

The protein resides in the cytoplasm. It carries out the reaction tRNA(Cys) + L-cysteine + ATP = L-cysteinyl-tRNA(Cys) + AMP + diphosphate. The protein is Cysteine--tRNA ligase of Laribacter hongkongensis (strain HLHK9).